Consider the following 255-residue polypeptide: Geranylgeranylglyceryl phosphate synthase (255 aa).

Mg(2+) is bound by residues aspartate 26 and serine 55. Residues 174–180 (YLEAGSG), 205–206 (GG), and 227–228 (GT) each bind sn-glycerol 1-phosphate.

The protein belongs to the GGGP/HepGP synthase family. Group II subfamily. The cofactor is Mg(2+).

It localises to the cytoplasm. It catalyses the reaction sn-glycerol 1-phosphate + (2E,6E,10E)-geranylgeranyl diphosphate = sn-3-O-(geranylgeranyl)glycerol 1-phosphate + diphosphate. The protein operates within membrane lipid metabolism; glycerophospholipid metabolism. In terms of biological role, prenyltransferase that catalyzes the transfer of the geranylgeranyl moiety of geranylgeranyl diphosphate (GGPP) to the C3 hydroxyl of sn-glycerol-1-phosphate (G1P). This reaction is the first ether-bond-formation step in the biosynthesis of archaeal membrane lipids. This is Geranylgeranylglyceryl phosphate synthase from Thermococcus sibiricus (strain DSM 12597 / MM 739).